The sequence spans 274 residues: MITFPNAKINLGLSITEKRPDGYHNLETVFYPVALEDALEIRTSPEADKKFSLHQYGMEISGNPEDNLVVKAYLLLDKEFHLCPIEIHLYKHIPSGAGLGGGSSDAAFMLKLLNEHFQLNLSEDQLEIYAATLGADCAFFIRNAPTFAEGVGNIFSPIPLSLKGYQILIIKPDVFVSTREAFANIHPHHPEYSIKEAIKRPVNEWKEILINDFEDSVFPQHPVIGEIKAELYRQGAVYASMSGSGSSVYGLFEPEGTLPETDWGTNVFCFKGRL.

Residue Lys-8 is part of the active site. Residue 94–104 (PSGAGLGGGSS) participates in ATP binding. Residue Asp-136 is part of the active site.

It belongs to the GHMP kinase family. IspE subfamily.

The enzyme catalyses 4-CDP-2-C-methyl-D-erythritol + ATP = 4-CDP-2-C-methyl-D-erythritol 2-phosphate + ADP + H(+). It participates in isoprenoid biosynthesis; isopentenyl diphosphate biosynthesis via DXP pathway; isopentenyl diphosphate from 1-deoxy-D-xylulose 5-phosphate: step 3/6. In terms of biological role, catalyzes the phosphorylation of the position 2 hydroxy group of 4-diphosphocytidyl-2C-methyl-D-erythritol. In Bacteroides thetaiotaomicron (strain ATCC 29148 / DSM 2079 / JCM 5827 / CCUG 10774 / NCTC 10582 / VPI-5482 / E50), this protein is 4-diphosphocytidyl-2-C-methyl-D-erythritol kinase.